The primary structure comprises 2146 residues: YLP motif-containing protein 1 (2146 aa).

Disordered stretches follow at residues 1–381 and 562–880; these read MYPN…ARLK and PPVM…FKMQ. Residues 14–26 are compositionally biased toward pro residues; the sequence is YPPPPVPPPPPVA. Composition is skewed to low complexity over residues 27-48 and 58-79; these read LPEA…PSSS and LAQL…LQPH. 5 stretches are compositionally biased toward pro residues: residues 80-92, 101-113, 147-157, 165-175, and 183-194; these read HLPP…PPVM, QPPP…PPGP, PESPPVPPGSY, MPPPQPPPSYY, and YLPPAQPSPSQS. Low complexity predominate over residues 195–237; that stretch reads PPSQSYLAPTPSYSSSSSSSQSYLSHSQSYLPSSQASPSRPSQ. 2 stretches are compositionally biased toward polar residues: residues 256–279 and 286–308; these read NKTT…QQQA and STMT…LQQR. Residues 309–319 show a composition bias toward basic residues; it reads TKVHLPGHKKG. Residues 325 to 334 show a composition bias toward basic and acidic residues; the sequence is DTPEPVKEEV. Pro residues-rich tracts occupy residues 349–368, 562–579, and 586–642; these read EEPP…PPEE, PPVM…PGMP, and GPPP…PQGI. Low complexity predominate over residues 643–663; the sequence is PPQLTAAPVPPASSSQSSQVP. Polar residues predominate over residues 692–702; the sequence is AGPSEQVNSKA. The residue at position 735 (Lys735) is an N6-methyllysine. Ser756 carries the post-translational modification Phosphoserine. Positions 758 to 806 are enriched in basic and acidic residues; the sequence is RGPRFDGPRRFEDLGSRCEGPRPKGPRFEGNRPDGPRPRYEGHPAEGTK. Arg814 bears the Omega-N-methylarginine mark. 2 stretches are compositionally biased toward polar residues: residues 820 to 835 and 868 to 880; these read FYIT…QSGP and DTSS…FKMQ. Position 829 is a phosphoserine (Ser829). At Arg831 the chain carries Omega-N-methylarginine. Lys891 is covalently cross-linked (Glycyl lysine isopeptide (Lys-Gly) (interchain with G-Cter in SUMO2)). Disordered stretches follow at residues 895 to 1211 and 1243 to 1351; these read AAQS…GRNA and NRED…DDRW. Polar residues-rich tracts occupy residues 896-909 and 923-933; these read AQSN…QQEP and NWDQNVQSMET. Lys983 is covalently cross-linked (Glycyl lysine isopeptide (Lys-Gly) (interchain with G-Cter in SUMO1); alternate). Lys983 is covalently cross-linked (Glycyl lysine isopeptide (Lys-Gly) (interchain with G-Cter in SUMO2); alternate). Composition is skewed to basic and acidic residues over residues 994–1012, 1027–1036, and 1053–1093; these read NNQD…RLEG, RMEDTRDKGL, and KQED…REKV. Residue Lys1053 forms a Glycyl lysine isopeptide (Lys-Gly) (interchain with G-Cter in SUMO1); alternate linkage. Residue Lys1053 forms a Glycyl lysine isopeptide (Lys-Gly) (interchain with G-Cter in SUMO2); alternate linkage. Phosphoserine is present on residues Ser1100 and Ser1119. 2 stretches are compositionally biased toward basic and acidic residues: residues 1129-1211 and 1243-1264; these read GSRE…GRNA and NRED…RGPW. The segment covering 1266–1276 has biased composition (acidic residues); it reads DDWERDQDMDE. Residues 1277-1328 show a composition bias toward basic and acidic residues; the sequence is DYNREMERDMDRDVDRISRPMDMYDRSLDNEWDRDYGRPLDEQESQFRERDI. The segment covering 1330–1342 has biased composition (pro residues); sequence SLPPLPPLPPLPP. Residue Ser1402 is modified to Phosphoserine. 3 disordered regions span residues 1407 to 1438, 1469 to 1573, and 1602 to 1828; these read PSDV…SLDS, QKEQ…EQER, and IPSA…PPGR. The span at 1417–1430 shows a compositional bias: low complexity; that stretch reads AEHMPSSHHSSEMM. Residues 1469-1480 are compositionally biased toward basic and acidic residues; the sequence is QKEQLQKMKDFG. Pro residues predominate over residues 1505 to 1520; it reads MYPPPGSYRPPPPMGK. Low complexity predominate over residues 1521–1539; it reads PPGSIVRPSAPPARSSVPV. Composition is skewed to pro residues over residues 1540–1562 and 1606–1636; these read TRPP…PPVI and PVLP…PPPV. Lys1652 is covalently cross-linked (Glycyl lysine isopeptide (Lys-Gly) (interchain with G-Cter in SUMO2)). Composition is skewed to basic and acidic residues over residues 1662–1696, 1704–1774, 1783–1793, and 1809–1828; these read ITLR…EPYF, ADHR…DRPV, GERRTYPEERM, and RVEK…PPGR. Residue Lys1710 forms a Glycyl lysine isopeptide (Lys-Gly) (interchain with G-Cter in SUMO2) linkage. The involved in interaction with PPP1CA stretch occupies residues 2096–2103; it reads KKRVRWAD.

As to quaternary structure, interacts with PPP1CA and NCOA5. Forms a complex with ILF2, ILF3, KHDRBS1, RBMX, NCOA5 and PPP1CA. As to expression, expressed in neuronal, neuroblastoma and embryonic kidney cell lines (at protein level).

The protein resides in the nucleus. The protein localises to the nucleus speckle. In terms of biological role, plays a role in the reduction of telomerase activity during differentiation of embryonic stem cells by binding to the core promoter of TERT and controlling its down-regulation. The protein is YLP motif-containing protein 1 (YLPM1) of Homo sapiens (Human).